The following is a 327-amino-acid chain: Plastid lipid-associated protein 1, chloroplastic (327 aa).

Residues 1-84 constitute a chloroplast transit peptide; it reads MATTVPLFSQ…WGPEIGLNSS (84 aa). The segment at 56-78 is disordered; the sequence is VNDEWGPDSKGRGGDVDDEWGPE. A coiled-coil region spans residues 85–107; sequence VAEKVAEEAIESAEETERLKRVL.

It belongs to the PAP/fibrillin family. As to expression, expressed in anthers, sepals seeds, fruit coats, and leaves. Very low in petals and pistils and not detected in roots.

The protein resides in the plastid. It localises to the chloroplast. Its function is as follows. May modulate the action of carotenoids. The protein is Plastid lipid-associated protein 1, chloroplastic (PAP1) of Brassica campestris (Field mustard).